The following is a 128-amino-acid chain: Centrosomal protein 15 (128 aa).

Its subcellular location is the cell projection. It localises to the cilium. Its function is as follows. May play a role in ciliary assembly. The polypeptide is Centrosomal protein 15 (CEP15) (Bos taurus (Bovine)).